Consider the following 230-residue polypeptide: uncharacterized protein (230 aa).

An N-terminal signal peptide occupies residues 1-18 (MRQYTSKSILFMTAIALS).

This is an uncharacterized protein from Pasteurella multocida (strain Pm70).